A 212-amino-acid chain; its full sequence is Thymidylate kinase (212 aa).

Residue 11-18 (GPEGAGKS) coordinates ATP.

Belongs to the thymidylate kinase family.

The enzyme catalyses dTMP + ATP = dTDP + ADP. Its function is as follows. Phosphorylation of dTMP to form dTDP in both de novo and salvage pathways of dTTP synthesis. The sequence is that of Thymidylate kinase from Streptococcus sanguinis (strain SK36).